Here is a 561-residue protein sequence, read N- to C-terminus: MITAALHEPQIHKPTDTSVVSDDVLPHSPPTPRIFRSKLPDIDIPNHLPLHTYCFEKLSSVSDKPCLIVGSTGKSYTYGETHLICRRVASGLYKLGIRKGDVIMILLQNSAEFVFSFMGASMIGAVSTTANPFYTSQELYKQLKSSGAKLIITHSQYVDKLKNLGENLTLITTDEPTPENCLPFSTLITDDETNPFQETVDIGGDDAAALPFSSGTTGLPKGVVLTHKSLITSVAQQVDGDNPNLYLKSNDVILCVLPLFHIYSLNSVLLNSLRSGATVLLMHKFEIGALLDLIQRHRVTIAALVPPLVIALAKNPTVNSYDLSSVRFVLSGAAPLGKELQDSLRRRLPQAILGQGYGMTEAGPVLSMSLGFAKEPIPTKSGSCGTVVRNAELKVVHLETRLSLGYNQPGEICIRGQQIMKEYLNDPEATSATIDEEGWLHTGDIGYVDEDDEIFIVDRLKEVIKFKGFQVPPAELESLLINHHSIADAAVVPQNDEVAGEVPVAFVVRSNGNDITEEDVKEYVAKQVVFYKRLHKVFFVASIPKSPSGKILRKDLKAKLC.

The ATP site is built by Ser213, Ser214, Gly215, Thr216, Thr217, and Lys221. Positions 263 and 267 each coordinate (E)-4-coumaroyl-AMP. Lys284 is a CoA binding site. The SBD1 stretch occupies residues 286–355 (EIGALLDLIQ…RRLPQAILGQ (70 aa)). The (E)-4-coumaroyl-AMP site is built by Ala333, Gln355, Gly356, Thr360, and Met368. The ATP site is built by Gln355, Gly356, and Thr360. Residues 356–423 (GYGMTEAGPV…IRGQQIMKEY (68 aa)) are SBD2. ATP is bound by residues Asp444 and Arg459. The (E)-4-coumaroyl-AMP site is built by Lys461 and Lys465. CoA contacts are provided by Lys467 and Gly468. Residue Lys550 participates in ATP binding.

The protein belongs to the ATP-dependent AMP-binding enzyme family. The cofactor is Mg(2+). As to expression, preferentially expressed in leaves, flowers and siliques.

The enzyme catalyses (E)-4-coumarate + ATP + CoA = (E)-4-coumaroyl-CoA + AMP + diphosphate. It carries out the reaction (E)-caffeate + ATP + CoA = (E)-caffeoyl-CoA + AMP + diphosphate. The catalysed reaction is (E)-ferulate + ATP + CoA = (E)-feruloyl-CoA + AMP + diphosphate. It catalyses the reaction (E)-4-coumarate + ATP + H(+) = (E)-4-coumaroyl-AMP + diphosphate. The enzyme catalyses (E)-4-coumaroyl-AMP + CoA = (E)-4-coumaroyl-CoA + AMP + H(+). It carries out the reaction (E)-caffeate + ATP + H(+) = (E)-caffeoyl-AMP + diphosphate. The catalysed reaction is (E)-caffeoyl-AMP + CoA = (E)-caffeoyl-CoA + AMP + H(+). It catalyses the reaction (E)-ferulate + ATP + H(+) = (E)-feruloyl-AMP + diphosphate. The enzyme catalyses (E)-feruloyl-AMP + CoA = (E)-feruloyl-CoA + AMP + H(+). It participates in phytoalexin biosynthesis; 3,4',5-trihydroxystilbene biosynthesis; 3,4',5-trihydroxystilbene from trans-4-coumarate: step 1/2. Produces CoA thioesters of a variety of hydroxy- and methoxy-substituted cinnamic acids, which are used to synthesize several phenylpropanoid-derived compounds, including anthocyanins, flavonoids, isoflavonoids, coumarins, lignin, suberin and wall-bound phenolics. Follows a two-step reaction mechanism, wherein the carboxylate substrate first undergoes adenylation by ATP, followed by a thioesterification in the presence of CoA to yield the final CoA thioesters. This is 4-coumarate--CoA ligase 3 from Arabidopsis thaliana (Mouse-ear cress).